The sequence spans 295 residues: tRNA dimethylallyltransferase (295 aa).

11 to 18 (GPTVSGKS) serves as a coordination point for ATP. 13 to 18 (TVSGKS) lines the substrate pocket. 2 interaction with substrate tRNA regions span residues 36–39 (DSMQ) and 158–162 (QRIIR).

Belongs to the IPP transferase family. As to quaternary structure, monomer. It depends on Mg(2+) as a cofactor.

The enzyme catalyses adenosine(37) in tRNA + dimethylallyl diphosphate = N(6)-dimethylallyladenosine(37) in tRNA + diphosphate. Its function is as follows. Catalyzes the transfer of a dimethylallyl group onto the adenine at position 37 in tRNAs that read codons beginning with uridine, leading to the formation of N6-(dimethylallyl)adenosine (i(6)A). The chain is tRNA dimethylallyltransferase from Bartonella quintana (strain Toulouse) (Rochalimaea quintana).